A 210-amino-acid chain; its full sequence is Thiamine-phosphate synthase (210 aa).

Residues 39-43 (QLREK) and asparagine 71 contribute to the 4-amino-2-methyl-5-(diphosphooxymethyl)pyrimidine site. Positions 72 and 91 each coordinate Mg(2+). 4-amino-2-methyl-5-(diphosphooxymethyl)pyrimidine is bound at residue serine 110. 136 to 138 (TST) is a 2-[(2R,5Z)-2-carboxy-4-methylthiazol-5(2H)-ylidene]ethyl phosphate binding site. Lysine 139 lines the 4-amino-2-methyl-5-(diphosphooxymethyl)pyrimidine pocket. Residues glycine 166 and 186–187 (VS) contribute to the 2-[(2R,5Z)-2-carboxy-4-methylthiazol-5(2H)-ylidene]ethyl phosphate site.

It belongs to the thiamine-phosphate synthase family. Mg(2+) is required as a cofactor.

The enzyme catalyses 2-[(2R,5Z)-2-carboxy-4-methylthiazol-5(2H)-ylidene]ethyl phosphate + 4-amino-2-methyl-5-(diphosphooxymethyl)pyrimidine + 2 H(+) = thiamine phosphate + CO2 + diphosphate. It catalyses the reaction 2-(2-carboxy-4-methylthiazol-5-yl)ethyl phosphate + 4-amino-2-methyl-5-(diphosphooxymethyl)pyrimidine + 2 H(+) = thiamine phosphate + CO2 + diphosphate. It carries out the reaction 4-methyl-5-(2-phosphooxyethyl)-thiazole + 4-amino-2-methyl-5-(diphosphooxymethyl)pyrimidine + H(+) = thiamine phosphate + diphosphate. It participates in cofactor biosynthesis; thiamine diphosphate biosynthesis; thiamine phosphate from 4-amino-2-methyl-5-diphosphomethylpyrimidine and 4-methyl-5-(2-phosphoethyl)-thiazole: step 1/1. Condenses 4-methyl-5-(beta-hydroxyethyl)thiazole monophosphate (THZ-P) and 2-methyl-4-amino-5-hydroxymethyl pyrimidine pyrophosphate (HMP-PP) to form thiamine monophosphate (TMP). This is Thiamine-phosphate synthase from Ruminiclostridium cellulolyticum (strain ATCC 35319 / DSM 5812 / JCM 6584 / H10) (Clostridium cellulolyticum).